A 445-amino-acid polypeptide reads, in one-letter code: Arginine/agmatine antiporter (445 aa).

Over 1 to 9 (MSSDADAHK) the chain is Cytoplasmic. Residues 10–30 (VGLIPVTLMVSGNIMGSGVFL) form a helical membrane-spanning segment. Ile-23 provides a ligand contact to agmatine. Positions 23 and 26 each coordinate L-arginine. Residues 31–38 (LPANLAAT) lie on the Periplasmic side of the membrane. Residues 39-59 (GGIAIYGWLVTIIGALALSMV) traverse the membrane as a helical segment. Residues 60–98 (YAKMSSLDPSPGGSYAYARRCFGPFLGYQTNVLYWLACW) lie on the Cytoplasmic side of the membrane. Residues Ala-96, Cys-97, and Asn-101 each contribute to the agmatine site. Residue Ala-96 participates in L-arginine binding. The helical transmembrane segment at 99-119 (IGNIAMVVIGVGYLSYFFPIL) threads the bilayer. The Periplasmic portion of the chain corresponds to 120-122 (KDP). Residues 123–143 (LVLTLTCVAVLWIFVLLNIVG) traverse the membrane as a helical segment. At 144–152 (PKMITRVQA) the chain is on the cytoplasmic side. Residues 153-173 (VATVLALVPIVGIAVFGWFWF) form a helical membrane-spanning segment. At 174–196 (KGETYMAAWNVSGMNTFGAIQST) the chain is on the periplasmic side. A helical membrane pass occupies residues 197–217 (LNVTLWSFIGVESASVAAGVV). Residues Trp-202 and Ile-205 each contribute to the L-arginine site. Agmatine is bound at residue Ile-205. The Cytoplasmic portion of the chain corresponds to 218–225 (KNPKRNVP). The helical transmembrane segment at 226–246 (IATIGGVLIAAVCYVLSTTAI) threads the bilayer. Topologically, residues 247–275 (MGMIPNAALRVSASPFGDAARMALGDTAG) are periplasmic. Residues 276–296 (AIVSFCAAAGCLGSLGGWTLL) traverse the membrane as a helical segment. Position 293 (Trp-293) interacts with agmatine. Over 297 to 319 (AGQTAKAAADDGLFPPIFARVNK) the chain is Cytoplasmic. A helical transmembrane segment spans residues 320-340 (AGTPVAGLLIVGVLMTIFQFS). At 341–355 (SMSPNAAKEFGLVSS) the chain is on the periplasmic side. Residues 356–376 (VSVIFTLVPYLYTCAALLLLG) traverse the membrane as a helical segment. Ser-357 lines the L-arginine pocket. The Cytoplasmic portion of the chain corresponds to 377 to 385 (HGHFGKARP). The chain crosses the membrane as a helical span at residues 386–406 (LYLLITFVAFVYCIWAVIGSG). At 407-408 (AK) the chain is on the periplasmic side. Residues 409-429 (EVMWSFVTLMVITALYALNYN) form a helical membrane-spanning segment. Topologically, residues 430-445 (RIHKNPYPLDAPVKQD) are cytoplasmic.

The protein belongs to the amino acid-polyamine-organocation (APC) superfamily. Basic amino acid/polyamine antiporter (APA) (TC 2.A.3.2) family. Homodimer; each subunit has its own individual transport capacity.

It is found in the cell inner membrane. It carries out the reaction agmatine(in) + L-arginine(out) = agmatine(out) + L-arginine(in). Its function is as follows. Major component of the acid-resistance (AR) system allowing enteric pathogens to survive the acidic environment in the stomach. Exchanges extracellular arginine for its intracellular decarboxylation product agmatine (Agm) thereby expelling intracellular protons. Probably undergoes several conformational states in order to translocate the substrate across the membrane; keeps the substrate accessible to only 1 side of the membrane at a time by opening and closing 3 membrane-internal gates. This Salmonella typhi protein is Arginine/agmatine antiporter (adiC).